The sequence spans 96 residues: Aspartyl/glutamyl-tRNA(Asn/Gln) amidotransferase subunit C (96 aa).

The protein belongs to the GatC family. As to quaternary structure, heterotrimer of A, B and C subunits.

The enzyme catalyses L-glutamyl-tRNA(Gln) + L-glutamine + ATP + H2O = L-glutaminyl-tRNA(Gln) + L-glutamate + ADP + phosphate + H(+). It carries out the reaction L-aspartyl-tRNA(Asn) + L-glutamine + ATP + H2O = L-asparaginyl-tRNA(Asn) + L-glutamate + ADP + phosphate + 2 H(+). Functionally, allows the formation of correctly charged Asn-tRNA(Asn) or Gln-tRNA(Gln) through the transamidation of misacylated Asp-tRNA(Asn) or Glu-tRNA(Gln) in organisms which lack either or both of asparaginyl-tRNA or glutaminyl-tRNA synthetases. The reaction takes place in the presence of glutamine and ATP through an activated phospho-Asp-tRNA(Asn) or phospho-Glu-tRNA(Gln). The sequence is that of Aspartyl/glutamyl-tRNA(Asn/Gln) amidotransferase subunit C from Neisseria gonorrhoeae (strain ATCC 700825 / FA 1090).